The primary structure comprises 1598 residues: Pentafunctional AROM polypeptide (1598 aa).

The interval 1-384 (MGVPTKISIL…YEPRACTVSN (384 aa)) is 3-dehydroquinate synthase. NAD(+) contacts are provided by residues 44–46 (DTN), 81–84 (ESSK), 114–116 (GGV), and aspartate 119. Position 130 (arginine 130) interacts with 7-phospho-2-dehydro-3-deoxy-D-arabino-heptonate. 139–140 (TT) contributes to the NAD(+) binding site. The 7-phospho-2-dehydro-3-deoxy-D-arabino-heptonate site is built by aspartate 146 and lysine 152. Residue lysine 161 participates in NAD(+) binding. Asparagine 162 lines the 7-phospho-2-dehydro-3-deoxy-D-arabino-heptonate pocket. NAD(+) contacts are provided by residues 179-182 (FLNT) and asparagine 190. Glutamate 194 contributes to the Zn(2+) binding site. Residues 194–197 (EVIK) and lysine 250 contribute to the 7-phospho-2-dehydro-3-deoxy-D-arabino-heptonate site. The Proton acceptor; for 3-dehydroquinate synthase activity role is filled by glutamate 260. Residues 264–268 (RNLLN) and histidine 271 contribute to the 7-phospho-2-dehydro-3-deoxy-D-arabino-heptonate site. Histidine 271 is a binding site for Zn(2+). Catalysis depends on histidine 275, which acts as the Proton acceptor; for 3-dehydroquinate synthase activity. 7-phospho-2-dehydro-3-deoxy-D-arabino-heptonate contacts are provided by histidine 287 and lysine 356. Histidine 287 is a binding site for Zn(2+). Residues 397–842 (VYPGFPKSLN…WDTLAQTFKV (446 aa)) are EPSP synthase. The For EPSP synthase activity role is filled by cysteine 824. Residues 867 to 1059 (AASIFIIGMR…RRKENTFFVS (193 aa)) are shikimate kinase. Residue 874–881 (GMRGAGKT) participates in ATP binding. The segment at 1060 to 1280 (LTFPDLTPAS…AAPGQLSARE (221 aa)) is 3-dehydroquinase. Histidine 1183 functions as the Proton acceptor; for 3-dehydroquinate dehydratase activity in the catalytic mechanism. Lysine 1211 acts as the Schiff-base intermediate with substrate; for 3-dehydroquinate dehydratase activity in catalysis. A shikimate dehydrogenase region spans residues 1293–1598 (AKKFAVIGKP…GVSSSDDIIS (306 aa)).

It in the N-terminal section; belongs to the sugar phosphate cyclases superfamily. Dehydroquinate synthase family. This sequence in the 2nd section; belongs to the EPSP synthase family. The protein in the 3rd section; belongs to the shikimate kinase family. In the 4th section; belongs to the type-I 3-dehydroquinase family. It in the C-terminal section; belongs to the shikimate dehydrogenase family. In terms of assembly, homodimer. Requires Zn(2+) as cofactor.

It localises to the cytoplasm. It catalyses the reaction 7-phospho-2-dehydro-3-deoxy-D-arabino-heptonate = 3-dehydroquinate + phosphate. It carries out the reaction 3-dehydroquinate = 3-dehydroshikimate + H2O. The catalysed reaction is shikimate + NADP(+) = 3-dehydroshikimate + NADPH + H(+). The enzyme catalyses shikimate + ATP = 3-phosphoshikimate + ADP + H(+). It catalyses the reaction 3-phosphoshikimate + phosphoenolpyruvate = 5-O-(1-carboxyvinyl)-3-phosphoshikimate + phosphate. It functions in the pathway metabolic intermediate biosynthesis; chorismate biosynthesis; chorismate from D-erythrose 4-phosphate and phosphoenolpyruvate: step 2/7. Its pathway is metabolic intermediate biosynthesis; chorismate biosynthesis; chorismate from D-erythrose 4-phosphate and phosphoenolpyruvate: step 3/7. The protein operates within metabolic intermediate biosynthesis; chorismate biosynthesis; chorismate from D-erythrose 4-phosphate and phosphoenolpyruvate: step 4/7. It participates in metabolic intermediate biosynthesis; chorismate biosynthesis; chorismate from D-erythrose 4-phosphate and phosphoenolpyruvate: step 5/7. It functions in the pathway metabolic intermediate biosynthesis; chorismate biosynthesis; chorismate from D-erythrose 4-phosphate and phosphoenolpyruvate: step 6/7. Its function is as follows. The AROM polypeptide catalyzes 5 consecutive enzymatic reactions in prechorismate polyaromatic amino acid biosynthesis. This is Pentafunctional AROM polypeptide from Paracoccidioides lutzii (strain ATCC MYA-826 / Pb01) (Paracoccidioides brasiliensis).